An 83-amino-acid chain; its full sequence is uncharacterized protein (83 aa).

Transmembrane regions (helical) follow at residues Gly23 to Ala43 and Ser49 to Gly69.

Its subcellular location is the cell membrane. This is an uncharacterized protein from Mycobacterium tuberculosis (strain CDC 1551 / Oshkosh).